We begin with the raw amino-acid sequence, 404 residues long: MSRCVITLNAGSSSIKFALFREGLTQEGSAKELTPMAIGLAEMVGEERRITVHDGAGAKIYEVKRTEHVDAPFHAEALRRILAWRQSAFPDAEVVAAGHRVVHGGVHYSAPVIVTDEVLKYLHTLIPLAPLHEPYNIAGILGAREAWPHVEQVACFDTAFHRTHPFVNDVFALPRRFYDEGVRRYGFHGLSYEYIVRRLREIAPLHAAGRVVVAHLGNGASMCAIRDGLSVASSMGFTALDGLPMGTRCGQLDPGVVLYLMQEKKMSAAEITDLLYRESGLKGLSGLSHDMRELEAADTLEAQQAIEYFVFRIRRELGGLAAVLKGIDAIVFCGGIGENSRHVRERVLEGMEWIGVELDRSANSANAEVISSERSRTRVFVIPTDEEGMIARHTLALLDQMAAA.

Asn-9 lines the Mg(2+) pocket. Lys-16 contributes to the ATP binding site. Arg-100 contacts substrate. Asp-157 functions as the Proton donor/acceptor in the catalytic mechanism. ATP-binding positions include 215-219 (HLGNG), 290-292 (DMR), and 335-339 (GIGEN). Glu-386 is a binding site for Mg(2+).

The protein belongs to the acetokinase family. Homodimer. Mg(2+) serves as cofactor. It depends on Mn(2+) as a cofactor.

Its subcellular location is the cytoplasm. The catalysed reaction is acetate + ATP = acetyl phosphate + ADP. It participates in metabolic intermediate biosynthesis; acetyl-CoA biosynthesis; acetyl-CoA from acetate: step 1/2. Functionally, catalyzes the formation of acetyl phosphate from acetate and ATP. Can also catalyze the reverse reaction. In Methylocella silvestris (strain DSM 15510 / CIP 108128 / LMG 27833 / NCIMB 13906 / BL2), this protein is Acetate kinase.